Here is a 219-residue protein sequence, read N- to C-terminus: Mucosal pentraxin (219 aa).

The first 19 residues, 1–19 (MEKLIVGTLLLTVLSGGIS), serve as a signal peptide directing secretion. A Pentraxin (PTX) domain is found at 24 to 219 (DGKAFIFPQE…YVVTKPKLWT (196 aa)). Cys55 and Cys114 are joined by a disulfide. Ca(2+) contacts are provided by Asp77, Asn78, Glu155, Gln156, Asp157, and Gln167.

This sequence belongs to the pentraxin family. Homopentamer. Pentraxin (or pentaxin) have a discoid arrangement of 5 non-covalently bound subunits. Requires Ca(2+) as cofactor. Expression is restricted to small intestine, stomach and colon. Within colon, expressed in epithelial cells located within the lower to mid region of transverse and distal crypts, but not in proximal colon.

The protein resides in the secreted. This chain is Mucosal pentraxin (Mptx1), found in Rattus norvegicus (Rat).